Here is a 298-residue protein sequence, read N- to C-terminus: tRNA pseudouridine synthase-like 1 (298 aa).

Catalysis depends on D60, which acts as the Nucleophile. Y124 contacts substrate.

The protein belongs to the tRNA pseudouridine synthase TruA family.

The enzyme catalyses a uridine in tRNA = a pseudouridine in tRNA. The sequence is that of tRNA pseudouridine synthase-like 1 (pusl1) from Xenopus laevis (African clawed frog).